A 734-amino-acid chain; its full sequence is MAKERGLISPSDFAQLQKYMEYSTKKVSDVLKLFEDGEMAEYLQGDAIGYEGFQQFLKIYLEVDNVPDHLSQALFQSFQTGYYIEDTVREDVVCLSDVSCYFSLLEGGRPEDKLEFTFKLYDTDRNGILDSSEVDRIIIQMMRMAEYLDWDVSELRPILQEMMKEIDYDGSGSVSLAEWLRAGATTVPLLVLLGLEMTLKDNGQHMWRPKRFPRPVYCNLCESSIGLGKQGLSCNLCKYIVHDQCAMKALPCEVSTYAKSRKDIGVQSHVWVRGGCESGRCDRCQKKIRIYHSLVGLHCVWCHLEIHDDCLPAMGHECDCGLLRDHILPPSSIYPSVLASGQERKTSKISQKTMDDLSLSTSEALRIDPVSNTHPLLVFVNPKSGGKQGERVLWKFQYLLNPRQVFNLLKDGPEPGLRFFRDVPDYRILVCGGDGTVGWILESIDKANLPFVPPVAVLPLGTGNDLARCLRWGGGYEGQNLGKILKDLETSKVVHMDRWSVEVIPQQTEEKSDPVPFQIINNYFSIGVDASIAHRFHIMREKYPEKFNSRMKNKLWYFEFATSESIFSTCKKLEESLTVEICGKPLDLSNLSLEGIAVLNIPSTHGGSNLWGDTKRPHGDIHGINQALGATAKVITDPDILKTCVPDLSDKRLEVVGLEGAIEIGQIYTKLKNAGHRLAKCSEITFHTTKTLPMQIDGEPWMQTPCTIKITHRNQMPMLVGPPPRSSNFFGFLC.

EF-hand domains follow at residues 109–144 (RPEDKLEFTFKLYDTDRNGILDSSEVDRIIIQMMRM) and 154–189 (ELRPILQEMMKEIDYDGSGSVSLAEWLRAGATTVPL). Residues Asp-122, Asp-124, Asn-126, Glu-133, Asp-167, Asp-169, Ser-171, Ser-173, and Glu-178 each contribute to the Ca(2+) site. 2 consecutive Phorbol-ester/DAG-type zinc fingers follow at residues 204-252 (QHMW…ALPC) and 268-318 (SHVW…GHEC). In terms of domain architecture, DAGKc spans 371 to 505 (SNTHPLLVFV…MDRWSVEVIP (135 aa)). Lys-483 is modified (N6-acetyllysine).

Belongs to the eukaryotic diacylglycerol kinase family. In terms of assembly, monomer.

It is found in the cytoplasm. The protein localises to the cytosol. It catalyses the reaction a 1,2-diacyl-sn-glycerol + ATP = a 1,2-diacyl-sn-glycero-3-phosphate + ADP + H(+). The enzyme catalyses a 1-O-alkyl-sn-glycerol + ATP = a 1-O-alkyl-sn-glycero-3-phosphate + ADP + H(+). The catalysed reaction is 1-O-alkyl-2-acyl-sn-glycerol + ATP = 1-O-alkyl-2-acyl-sn-glycero-3-phosphate + ADP + H(+). It carries out the reaction 1,2-dihexadecanoyl-sn-glycerol + ATP = 1,2-dihexadecanoyl-sn-glycero-3-phosphate + ADP + H(+). It catalyses the reaction 1-hexadecanoyl-2-(9Z-octadecenoyl)-sn-glycerol + ATP = 1-hexadecanoyl-2-(9Z-octadecenoyl)-sn-glycero-3-phosphate + ADP + H(+). The enzyme catalyses 2-(9Z-octadecenoyl)-glycerol + ATP = 2-(9Z-octadecenoyl)-sn-glycero-3-phosphate + ADP + H(+). The catalysed reaction is 1,2-di-(9Z-octadecenoyl)-sn-glycerol + ATP = 1,2-di-(9Z-octadecenoyl)-sn-glycero-3-phosphate + ADP + H(+). It carries out the reaction 1-octadecanoyl-2-(5Z,8Z,11Z,14Z-eicosatetraenoyl)-sn-glycerol + ATP = 1-octadecanoyl-2-(5Z,8Z,11Z,14Z-eicosatetraenoyl)-sn-glycero-3-phosphate + ADP + H(+). It catalyses the reaction 1,2-didecanoyl-sn-glycerol + ATP = 1,2-didecanoyl-sn-glycero-3-phosphate + ADP + H(+). The enzyme catalyses 1-O-hexadecyl-2-acetyl-sn-glycerol + ATP = 1-O-hexadecyl-2-acetyl-sn-glycero-3-phosphate + ADP + H(+). The catalysed reaction is 1-O-hexadecyl-2-(5Z,8Z,11Z,14Z-eicosatetraenoyl)-sn-glycerol + ATP = 1-O-hexadecyl-2-(5Z,8Z,11Z,14Z-eicosatetraenoyl)-sn-glycero-3-phosphate + ADP + H(+). It carries out the reaction 1-O-hexadecyl-2-(9Z-octadecenoyl)-sn-glycerol + ATP = 1-O-hexadecyl-2-(9Z-octadecenoyl)-sn-glycero-3-phosphate + ADP + H(+). It catalyses the reaction 1-O-hexadecyl-sn-glycerol + ATP = 1-O-hexadecyl-sn-glycero-3-phosphate + ADP + H(+). The protein operates within lipid metabolism; glycerolipid metabolism. Stimulated by calcium and phosphatidylserine. Its function is as follows. Diacylglycerol kinase that converts diacylglycerol/DAG into phosphatidic acid/phosphatidate/PA and regulates the respective levels of these two bioactive lipids. Thereby, acts as a central switch between the signaling pathways activated by these second messengers with different cellular targets and opposite effects in numerous biological processes. Also plays an important role in the biosynthesis of complex lipids. Can also phosphorylate 1-alkyl-2-acylglycerol in vitro as efficiently as diacylglycerol provided it contains an arachidonoyl group. Also involved in the production of alkyl-lysophosphatidic acid, another bioactive lipid, through the phosphorylation of 1-alkyl-2-acetyl glycerol. This chain is Diacylglycerol kinase alpha (DGKA), found in Bos taurus (Bovine).